The following is a 212-amino-acid chain: MKLEDIRREYLQNALSEDNLLDDPFKQFETWLEHAVASNLPDPTAMVVATVDDTGQPSQRIVLLKHLDNDGFVFFTNTGSRKAQELKGNNKISLHFPWHPMERQVIVYGEAKPLPTSAVAKYFLSRPKESQLAAWASAQSRPVSSRKVLMETFANMKNKFAKGEIPLPDFWGGYCVVPQKIEFWQGGAHRLHDRFMYQRQADNSWQITRLNP.

Substrate contacts are provided by residues 7-10 (RREY) and K65. FMN-binding positions include 60-65 (RIVLLK), 75-76 (FT), R81, K82, and Q104. Substrate contacts are provided by Y122, R126, and S130. Residues 139–140 (QS) and W184 each bind FMN. Residue 190 to 192 (RLH) participates in substrate binding. R194 contacts FMN.

Belongs to the pyridoxamine 5'-phosphate oxidase family. In terms of assembly, homodimer. It depends on FMN as a cofactor.

It carries out the reaction pyridoxamine 5'-phosphate + O2 + H2O = pyridoxal 5'-phosphate + H2O2 + NH4(+). The enzyme catalyses pyridoxine 5'-phosphate + O2 = pyridoxal 5'-phosphate + H2O2. It participates in cofactor metabolism; pyridoxal 5'-phosphate salvage; pyridoxal 5'-phosphate from pyridoxamine 5'-phosphate: step 1/1. The protein operates within cofactor metabolism; pyridoxal 5'-phosphate salvage; pyridoxal 5'-phosphate from pyridoxine 5'-phosphate: step 1/1. Functionally, catalyzes the oxidation of either pyridoxine 5'-phosphate (PNP) or pyridoxamine 5'-phosphate (PMP) into pyridoxal 5'-phosphate (PLP). The polypeptide is Pyridoxine/pyridoxamine 5'-phosphate oxidase (Pseudoalteromonas translucida (strain TAC 125)).